A 464-amino-acid polypeptide reads, in one-letter code: 3-isopropylmalate dehydratase large subunit (464 aa).

Residues cysteine 337, cysteine 397, and cysteine 400 each contribute to the [4Fe-4S] cluster site.

It belongs to the aconitase/IPM isomerase family. LeuC type 1 subfamily. As to quaternary structure, heterodimer of LeuC and LeuD. The cofactor is [4Fe-4S] cluster.

It catalyses the reaction (2R,3S)-3-isopropylmalate = (2S)-2-isopropylmalate. The protein operates within amino-acid biosynthesis; L-leucine biosynthesis; L-leucine from 3-methyl-2-oxobutanoate: step 2/4. Its function is as follows. Catalyzes the isomerization between 2-isopropylmalate and 3-isopropylmalate, via the formation of 2-isopropylmaleate. This Bacillus mycoides (strain KBAB4) (Bacillus weihenstephanensis) protein is 3-isopropylmalate dehydratase large subunit.